The primary structure comprises 413 residues: Serine/threonine transporter SstT (413 aa).

A run of 9 helical transmembrane segments spans residues 11 to 31, 43 to 63, 82 to 102, 141 to 161, 192 to 212, 216 to 236, 298 to 318, 339 to 359, and 363 to 383; these read IANG…VILA, FLGS…VFVL, IIGL…LFSF, ALLT…GITM, IGIF…ALAG, LLMV…PIIV, MGGA…TLGI, ASGV…LFGI, and VAMQ…SAET.

This sequence belongs to the dicarboxylate/amino acid:cation symporter (DAACS) (TC 2.A.23) family.

The protein resides in the cell inner membrane. The enzyme catalyses L-serine(in) + Na(+)(in) = L-serine(out) + Na(+)(out). It carries out the reaction L-threonine(in) + Na(+)(in) = L-threonine(out) + Na(+)(out). In terms of biological role, involved in the import of serine and threonine into the cell, with the concomitant import of sodium (symport system). This is Serine/threonine transporter SstT from Shewanella frigidimarina (strain NCIMB 400).